The chain runs to 630 residues: Membrane protein insertase YidC (630 aa).

The next 5 membrane-spanning stretches (helical) occupy residues 10–30, 396–416, 470–490, 528–548, and 571–591; these read LMFLVCAFAILIGYQFLVMGP, MVGNFGVAIMLLTVALKLILF, VPMLIQIPIFYSLYKVLTVTI, LIGAFLSGPLHIGVWPLLYGF, and FFPIVFTFTLSQFAVGLVIYW.

Belongs to the OXA1/ALB3/YidC family. Type 1 subfamily. Interacts with the Sec translocase complex via SecD. Specifically interacts with transmembrane segments of nascent integral membrane proteins during membrane integration.

It localises to the cell inner membrane. In terms of biological role, required for the insertion and/or proper folding and/or complex formation of integral membrane proteins into the membrane. Involved in integration of membrane proteins that insert both dependently and independently of the Sec translocase complex, as well as at least some lipoproteins. Aids folding of multispanning membrane proteins. The chain is Membrane protein insertase YidC from Caulobacter sp. (strain K31).